The sequence spans 27 residues: Peptide Cn29 (27 aa).

Cystine bridges form between Cys-2-Cys-23, Cys-5-Cys-18, and Cys-12-Cys-25.

As to expression, expressed by the venom gland.

The protein localises to the secreted. This Centruroides noxius (Mexican scorpion) protein is Peptide Cn29.